Consider the following 265-residue polypeptide: Short-chain dehydrogenase/reductase GME11373 (265 aa).

4 residues coordinate NADP(+): Ile26, Asp72, Asn99, and Arg132. Active-site proton donor residues include Ser148 and Ser149. NADP(+) is bound by residues Tyr163, Lys167, and Thr198. Catalysis depends on Tyr163, which acts as the Proton acceptor. The Lowers pKa of active site Tyr role is filled by Lys167.

The protein belongs to the short-chain dehydrogenases/reductases (SDR) family.

It functions in the pathway secondary metabolite biosynthesis. Short-chain dehydrogenase/reductase; part of the gene cluster that mediates the biosynthesis of dibenzodioxocinones such as pestalotiollide B, a novel class of inhibitors against cholesterol ester transfer protein (CEPT). The biosynthesis initiates from condensation of acetate and malonate units catalyzed by the non-reducing PKS pks8/GME11356. Pks8/GME11356 lacks a thioesterase (TE) domain, which is important to the cyclizing of the third ring of atrochrysone carboxylic acid, and the esterase GME11355 might play the role of TE and catalyzes the cyclization reaction of the C ring. The lactamase-like protein GME11357 (or other beta-lactamases in Pestalotiopsis microspora) probably hydrolyzes the thioester bond between the ACP of pks8/GME11356 and the intermediate to release atrochrysone carboxylic acid, which is spontaneously dehydrates to form endocrocin anthrone. Endocrocin anthrone is further converted to emodin via the endocrocin intermediate. Emodin is then oxidized by several enzymes such as the Baeyer-Villiger oxidase GME11358, the oxidoreductase GME11367, the short chain dehydrogenase/reductase GME11373, as well as by other oxidoreductases from the cluster, to modify the A and C rings and open the B ring, and finally yield monodictyphenone. The prenyltransferase GME11375 may catalyze the addition reaction between the C5 side chains and the carbon bone of dibenzodioxocinones. The remaining biochemical reactions to the final product dibenzodioxocinones should be methylation catalyzed by methyltransferase GME11366 and reduction and lactonization reaction catalyzed by a series of oxidordeuctases. In Pestalotiopsis microspora, this protein is Short-chain dehydrogenase/reductase GME11373.